Consider the following 85-residue polypeptide: Large ribosomal subunit protein bL27 (85 aa).

Residues 1 to 21 (MAHKKGVGSSRNGRDSDGQRL) form a disordered region.

It belongs to the bacterial ribosomal protein bL27 family.

The protein is Large ribosomal subunit protein bL27 of Geobacter sp. (strain M21).